The sequence spans 95 residues: MSLDHATVRRIAKLARIRLDEEEVPRLAGELNAILGYVEQLAEVDVEGVAPLSGGAQMALRMREDEVTDGRYPDRVLANAPERIGDFFAVPKVVE.

It belongs to the GatC family. Heterotrimer of A, B and C subunits.

The catalysed reaction is L-glutamyl-tRNA(Gln) + L-glutamine + ATP + H2O = L-glutaminyl-tRNA(Gln) + L-glutamate + ADP + phosphate + H(+). It carries out the reaction L-aspartyl-tRNA(Asn) + L-glutamine + ATP + H2O = L-asparaginyl-tRNA(Asn) + L-glutamate + ADP + phosphate + 2 H(+). In terms of biological role, allows the formation of correctly charged Asn-tRNA(Asn) or Gln-tRNA(Gln) through the transamidation of misacylated Asp-tRNA(Asn) or Glu-tRNA(Gln) in organisms which lack either or both of asparaginyl-tRNA or glutaminyl-tRNA synthetases. The reaction takes place in the presence of glutamine and ATP through an activated phospho-Asp-tRNA(Asn) or phospho-Glu-tRNA(Gln). The chain is Aspartyl/glutamyl-tRNA(Asn/Gln) amidotransferase subunit C from Acidiphilium cryptum (strain JF-5).